We begin with the raw amino-acid sequence, 549 residues long: Glucose-6-phosphate isomerase (549 aa).

The active-site Proton donor is the Glu353. Catalysis depends on residues His384 and Lys513.

It belongs to the GPI family.

It localises to the cytoplasm. It carries out the reaction alpha-D-glucose 6-phosphate = beta-D-fructose 6-phosphate. Its pathway is carbohydrate biosynthesis; gluconeogenesis. It participates in carbohydrate degradation; glycolysis; D-glyceraldehyde 3-phosphate and glycerone phosphate from D-glucose: step 2/4. Functionally, catalyzes the reversible isomerization of glucose-6-phosphate to fructose-6-phosphate. This is Glucose-6-phosphate isomerase from Brucella ovis (strain ATCC 25840 / 63/290 / NCTC 10512).